A 172-amino-acid chain; its full sequence is Cytidylate kinase (172 aa).

7-15 is a binding site for ATP; it reads GLAGTGTTT.

Belongs to the cytidylate kinase family. Type 2 subfamily.

It is found in the cytoplasm. The enzyme catalyses CMP + ATP = CDP + ADP. It carries out the reaction dCMP + ATP = dCDP + ADP. This chain is Cytidylate kinase, found in Methanobrevibacter smithii (strain ATCC 35061 / DSM 861 / OCM 144 / PS).